A 279-amino-acid polypeptide reads, in one-letter code: 2-dehydro-3-deoxyphosphooctonate aldolase (279 aa).

The protein belongs to the KdsA family.

The protein resides in the cytoplasm. The enzyme catalyses D-arabinose 5-phosphate + phosphoenolpyruvate + H2O = 3-deoxy-alpha-D-manno-2-octulosonate-8-phosphate + phosphate. It functions in the pathway carbohydrate biosynthesis; 3-deoxy-D-manno-octulosonate biosynthesis; 3-deoxy-D-manno-octulosonate from D-ribulose 5-phosphate: step 2/3. It participates in bacterial outer membrane biogenesis; lipopolysaccharide biosynthesis. The chain is 2-dehydro-3-deoxyphosphooctonate aldolase from Desulfosudis oleivorans (strain DSM 6200 / JCM 39069 / Hxd3) (Desulfococcus oleovorans).